The chain runs to 363 residues: Molybdenum import ATP-binding protein ModC (363 aa).

Residues 1–230 (MISARFSGRQ…PNLPLIHRPD (230 aa)) enclose the ABC transporter domain. 31 to 38 (GPSGCGKT) contributes to the ATP binding site. One can recognise a Mop domain in the interval 289–359 (DTTILNALPA…LKAMALSAPA (71 aa)).

This sequence belongs to the ABC transporter superfamily. Molybdate importer (TC 3.A.1.8) family. The complex is composed of two ATP-binding proteins (ModC), two transmembrane proteins (ModB) and a solute-binding protein (ModA).

It localises to the cell inner membrane. The catalysed reaction is molybdate(out) + ATP + H2O = molybdate(in) + ADP + phosphate + H(+). In terms of biological role, part of the ABC transporter complex ModABC involved in molybdenum import. Responsible for energy coupling to the transport system. This chain is Molybdenum import ATP-binding protein ModC, found in Rhodobacter capsulatus (Rhodopseudomonas capsulata).